The following is a 727-amino-acid chain: 1,4-alpha-glucan branching enzyme GlgB (727 aa).

The Nucleophile role is filled by aspartate 405. Residue glutamate 458 is the Proton donor of the active site.

This sequence belongs to the glycosyl hydrolase 13 family. GlgB subfamily. Monomer.

It catalyses the reaction Transfers a segment of a (1-&gt;4)-alpha-D-glucan chain to a primary hydroxy group in a similar glucan chain.. It participates in glycan biosynthesis; glycogen biosynthesis. In terms of biological role, catalyzes the formation of the alpha-1,6-glucosidic linkages in glycogen by scission of a 1,4-alpha-linked oligosaccharide from growing alpha-1,4-glucan chains and the subsequent attachment of the oligosaccharide to the alpha-1,6 position. The protein is 1,4-alpha-glucan branching enzyme GlgB of Yersinia enterocolitica serotype O:8 / biotype 1B (strain NCTC 13174 / 8081).